Here is a 210-residue protein sequence, read N- to C-terminus: Redox-sensing transcriptional repressor Rex (210 aa).

Positions 17-56 (KYHRYLNELMKNDVDRISSKELGEKIGFTASQIRQDLNCF) form a DNA-binding region, H-T-H motif. 91–96 (GAGNIG) is a binding site for NAD(+).

Belongs to the transcriptional regulatory Rex family. As to quaternary structure, homodimer.

Its subcellular location is the cytoplasm. Functionally, modulates transcription in response to changes in cellular NADH/NAD(+) redox state. This Clostridium botulinum (strain Eklund 17B / Type B) protein is Redox-sensing transcriptional repressor Rex.